We begin with the raw amino-acid sequence, 681 residues long: T-box brain protein 1 (681 aa).

2 disordered regions span residues 43 to 83 (TDNL…RSKL) and 108 to 127 (SQSS…FPYP). Over residues 58-68 (GMTNQSDTDNF) the composition is skewed to polar residues. Residues 108–122 (SQSSQPQSAATAPSA) show a composition bias toward low complexity. Positions 213–393 (LWLKFHRHQT…HNPFAKGFRD (181 aa)) form a DNA-binding region, T-box. The residue at position 408 (Thr408) is a Phosphothreonine. Ser410 bears the Phosphoserine mark. Residues 447-483 (PGAGAGPGPGTDRSVPHTNGLLSPQQAEDPGAPSPQR) are disordered. The segment covering 462–472 (PHTNGLLSPQQ) has biased composition (polar residues). At Ser594 the chain carries Phosphoserine. Positions 597–655 (APAAEDAKPKDLSDSSWIETPSSIKSIDSSDSGIYEQAKRRRISPADTPVSESSSPLKS) are disordered. Over residues 618–628 (SSIKSIDSSDS) the composition is skewed to low complexity. Ser640 bears the Phosphoserine mark.

Homodimer. Part of a complex containing CASK, TBR1 and TSPYL2; may modulate gene expression in response to neuronal synaptic activity. Forms homodimers. Interacts with FOXP2. Interacts with FOXP1. Interacts with BCL11A. In terms of tissue distribution, expressed in the developing and adult cortex. Expressed in the olfactory bulbs.

The protein localises to the nucleus. Functionally, transcriptional repressor involved in multiple aspects of cortical development, including neuronal migration, laminar and areal identity, and axonal projection. As transcriptional repressor of FEZF2, it blocks the formation of the corticospinal (CS) tract from layer 6 projection neurons, thereby restricting the origin of CS axons specifically to layer 5 neurons. The chain is T-box brain protein 1 (Tbr1) from Mus musculus (Mouse).